Here is a 527-residue protein sequence, read N- to C-terminus: Probable bifunctional tRNA threonylcarbamoyladenosine biosynthesis protein (527 aa).

Residues 1-324 form a kae1 region; it reads MIVLGLEGTA…YRIDEVDAPW (324 aa). Positions 107, 111, and 128 each coordinate Fe cation. L-threonylcarbamoyladenylate is bound by residues 128–132, aspartate 160, glycine 173, glutamate 177, and asparagine 257; that span reads YVSGG. Fe cation is bound at residue aspartate 285. The Protein kinase domain occupies 330–527; it reads VKYRDAGAES…EDIRRRHRYV (198 aa). ATP contacts are provided by residues 333–341 and lysine 354; that span reads RDAGAESRI. The active-site Proton acceptor; for kinase activity is aspartate 445.

This sequence in the N-terminal section; belongs to the KAE1 / TsaD family. In the C-terminal section; belongs to the protein kinase superfamily. Tyr protein kinase family. BUD32 subfamily. As to quaternary structure, component of the KEOPS complex that consists of Kae1, Bud32, Cgi121 and Pcc1; the whole complex dimerizes. It depends on Fe(2+) as a cofactor.

The protein resides in the cytoplasm. It catalyses the reaction L-seryl-[protein] + ATP = O-phospho-L-seryl-[protein] + ADP + H(+). It carries out the reaction L-threonyl-[protein] + ATP = O-phospho-L-threonyl-[protein] + ADP + H(+). The enzyme catalyses L-threonylcarbamoyladenylate + adenosine(37) in tRNA = N(6)-L-threonylcarbamoyladenosine(37) in tRNA + AMP + H(+). In terms of biological role, required for the formation of a threonylcarbamoyl group on adenosine at position 37 (t(6)A37) in tRNAs that read codons beginning with adenine. Is a component of the KEOPS complex that is probably involved in the transfer of the threonylcarbamoyl moiety of threonylcarbamoyl-AMP (TC-AMP) to the N6 group of A37. The Kae1 domain likely plays a direct catalytic role in this reaction. The Bud32 domain probably displays kinase activity that regulates Kae1 function. The sequence is that of Probable bifunctional tRNA threonylcarbamoyladenosine biosynthesis protein from Thermoplasma volcanium (strain ATCC 51530 / DSM 4299 / JCM 9571 / NBRC 15438 / GSS1).